We begin with the raw amino-acid sequence, 278 residues long: Alcohol dehydrogenase-related 31 kDa protein (278 aa).

11–34 (YVADCGGIALETSKVLMTKNIAKL) lines the NAD(+) pocket. Substrate is bound at residue S139. Y152 (proton acceptor) is an active-site residue.

This sequence belongs to the short-chain dehydrogenases/reductases (SDR) family.

This chain is Alcohol dehydrogenase-related 31 kDa protein (Adhr), found in Drosophila persimilis (Fruit fly).